Consider the following 420-residue polypeptide: Glutamyl-tRNA reductase (420 aa).

Residues 49–52 (TCNR), S109, 114–116 (EPQ), and Q120 each bind substrate. The active-site Nucleophile is C50. Residue 189–194 (GAGETI) participates in NADP(+) binding.

It belongs to the glutamyl-tRNA reductase family. As to quaternary structure, homodimer.

The catalysed reaction is (S)-4-amino-5-oxopentanoate + tRNA(Glu) + NADP(+) = L-glutamyl-tRNA(Glu) + NADPH + H(+). It functions in the pathway porphyrin-containing compound metabolism; protoporphyrin-IX biosynthesis; 5-aminolevulinate from L-glutamyl-tRNA(Glu): step 1/2. In terms of biological role, catalyzes the NADPH-dependent reduction of glutamyl-tRNA(Glu) to glutamate 1-semialdehyde (GSA). The sequence is that of Glutamyl-tRNA reductase from Proteus mirabilis (strain HI4320).